Reading from the N-terminus, the 295-residue chain is Bifunctional protein FolD (295 aa).

NADP(+) is bound by residues 165-167, Ser192, and Ile233; that span reads GRG.

The protein belongs to the tetrahydrofolate dehydrogenase/cyclohydrolase family. As to quaternary structure, homodimer.

The catalysed reaction is (6R)-5,10-methylene-5,6,7,8-tetrahydrofolate + NADP(+) = (6R)-5,10-methenyltetrahydrofolate + NADPH. It carries out the reaction (6R)-5,10-methenyltetrahydrofolate + H2O = (6R)-10-formyltetrahydrofolate + H(+). The protein operates within one-carbon metabolism; tetrahydrofolate interconversion. Functionally, catalyzes the oxidation of 5,10-methylenetetrahydrofolate to 5,10-methenyltetrahydrofolate and then the hydrolysis of 5,10-methenyltetrahydrofolate to 10-formyltetrahydrofolate. The polypeptide is Bifunctional protein FolD (Tropheryma whipplei (strain Twist) (Whipple's bacillus)).